The following is a 71-amino-acid chain: Ceratotoxin-D (71 aa).

The N-terminal stretch at 1–23 (MANLKAVFLICILAFIAFHCVVG) is a signal peptide. A propeptide spanning residues 24-35 (APTAEDSIVVKR) is cleaved from the precursor.

As to quaternary structure, homomer of four to six subunits.

It is found in the secreted. Female-specific peptides with potent activity against Gram-positive and Gram-negative bacteria. They have as well hemolytic activity. The polypeptide is Ceratotoxin-D (CTXD) (Ceratitis capitata (Mediterranean fruit fly)).